Reading from the N-terminus, the 575-residue chain is UvrABC system protein C (575 aa).

The GIY-YIG domain maps to 15–90 (AEPGVYQFEA…IKRHQPRYNV (76 aa)). In terms of domain architecture, UVR spans 198-233 (GVLAEPLRREMETAAASQAFERAASLRDRLEAVETF).

It belongs to the UvrC family. In terms of assembly, interacts with UvrB in an incision complex.

Its subcellular location is the cytoplasm. Its function is as follows. The UvrABC repair system catalyzes the recognition and processing of DNA lesions. UvrC both incises the 5' and 3' sides of the lesion. The N-terminal half is responsible for the 3' incision and the C-terminal half is responsible for the 5' incision. The protein is UvrABC system protein C of Natronomonas pharaonis (strain ATCC 35678 / DSM 2160 / CIP 103997 / JCM 8858 / NBRC 14720 / NCIMB 2260 / Gabara) (Halobacterium pharaonis).